We begin with the raw amino-acid sequence, 503 residues long: Cytochrome c lysine N-methyltransferase 1 (503 aa).

Positions 52-276 (SKFELLRIPR…EEAQVFISYA (225 aa)) constitute an SET domain. Residues 190 to 291 (NYEKLISTVY…VHFEQIYGFL (102 aa)) form an SET-like region.

Belongs to the class V-like SAM-binding methyltransferase superfamily.

The protein localises to the cytoplasm. It is found in the cytosol. The enzyme catalyses L-lysyl-[cytochrome c] + S-adenosyl-L-methionine = N(6)-methyl-L-lysyl-[cytochrome c] + S-adenosyl-L-homocysteine + H(+). Its function is as follows. Methyltransferase which mediates trimethylation of cytochrome c (CYC1). The chain is Cytochrome c lysine N-methyltransferase 1 (CTM1) from Kluyveromyces lactis (strain ATCC 8585 / CBS 2359 / DSM 70799 / NBRC 1267 / NRRL Y-1140 / WM37) (Yeast).